A 339-amino-acid polypeptide reads, in one-letter code: RNA 3'-terminal phosphate cyclase (339 aa).

ATP contacts are provided by residues glutamine 103 and 283 to 287 (HLADQ). Catalysis depends on histidine 308, which acts as the Tele-AMP-histidine intermediate.

This sequence belongs to the RNA 3'-terminal cyclase family. Type 1 subfamily.

It localises to the cytoplasm. The catalysed reaction is a 3'-end 3'-phospho-ribonucleotide-RNA + ATP = a 3'-end 2',3'-cyclophospho-ribonucleotide-RNA + AMP + diphosphate. Its function is as follows. Catalyzes the conversion of 3'-phosphate to a 2',3'-cyclic phosphodiester at the end of RNA. The mechanism of action of the enzyme occurs in 3 steps: (A) adenylation of the enzyme by ATP; (B) transfer of adenylate to an RNA-N3'P to produce RNA-N3'PP5'A; (C) and attack of the adjacent 2'-hydroxyl on the 3'-phosphorus in the diester linkage to produce the cyclic end product. The biological role of this enzyme is unknown but it is likely to function in some aspects of cellular RNA processing. The sequence is that of RNA 3'-terminal phosphate cyclase from Salmonella typhimurium (strain LT2 / SGSC1412 / ATCC 700720).